The primary structure comprises 188 residues: HTH-type transcriptional regulator Mb3439c (188 aa).

In terms of domain architecture, HTH tetR-type spans 17–77; that stretch reads EEVAAAILQA…AVLDHLGTKL (61 aa). Positions 40 to 59 form a DNA-binding region, H-T-H motif; the sequence is SIRDIAARSKVNHGLVFRHF.

Functionally, negatively regulates the expression of sulfate ester dioxygenase Mb3440 and its own expression. The polypeptide is HTH-type transcriptional regulator Mb3439c (Mycobacterium bovis (strain ATCC BAA-935 / AF2122/97)).